The sequence spans 281 residues: Bifunctional protein FolD (281 aa).

NADP(+) contacts are provided by residues 167-169 (GRS) and S192.

Belongs to the tetrahydrofolate dehydrogenase/cyclohydrolase family. As to quaternary structure, homodimer.

The enzyme catalyses (6R)-5,10-methylene-5,6,7,8-tetrahydrofolate + NADP(+) = (6R)-5,10-methenyltetrahydrofolate + NADPH. The catalysed reaction is (6R)-5,10-methenyltetrahydrofolate + H2O = (6R)-10-formyltetrahydrofolate + H(+). The protein operates within one-carbon metabolism; tetrahydrofolate interconversion. Catalyzes the oxidation of 5,10-methylenetetrahydrofolate to 5,10-methenyltetrahydrofolate and then the hydrolysis of 5,10-methenyltetrahydrofolate to 10-formyltetrahydrofolate. The sequence is that of Bifunctional protein FolD from Alcanivorax borkumensis (strain ATCC 700651 / DSM 11573 / NCIMB 13689 / SK2).